The chain runs to 339 residues: 4-hydroxy-2-oxovalerate aldolase (339 aa).

A Pyruvate carboxyltransferase domain is found at 7–259 (VILHDMSLRD…QSGIDLYKIM (253 aa)). 15 to 16 (RD) provides a ligand contact to substrate. A Mn(2+)-binding site is contributed by D16. H19 acts as the Proton acceptor in catalysis. Substrate-binding residues include S169 and H198. 2 residues coordinate Mn(2+): H198 and H200. Residue Y289 participates in substrate binding.

It belongs to the 4-hydroxy-2-oxovalerate aldolase family.

It carries out the reaction (S)-4-hydroxy-2-oxopentanoate = acetaldehyde + pyruvate. The chain is 4-hydroxy-2-oxovalerate aldolase from Marinomonas sp. (strain MWYL1).